We begin with the raw amino-acid sequence, 197 residues long: Auxin-responsive protein IAA19 (197 aa).

The short motif at 13 to 17 is the EAR-like (transcriptional repression) element; that stretch reads LRLGL. The span at 35 to 47 shows a compositional bias: polar residues; the sequence is MNMTSSGSNSDQC. The segment at 35–67 is disordered; sequence MNMTSSGSNSDQCESGVVSSGGDAEKVNDSPAA. A PB1 domain is found at 96–184; the sequence is LGYVKVSMDG…KRLRIMKRSD (89 aa).

The protein belongs to the Aux/IAA family. As to quaternary structure, homodimers and heterodimers. Interacts with the auxin response factor ARF7.

Its subcellular location is the nucleus. In terms of biological role, aux/IAA proteins are short-lived transcriptional factors that function as repressors of early auxin response genes at low auxin concentrations. Repression is thought to result from the interaction with auxin response factors (ARFs), proteins that bind to the auxin-responsive promoter element (AuxRE). Formation of heterodimers with ARF proteins may alter their ability to modulate early auxin response genes expression. The polypeptide is Auxin-responsive protein IAA19 (IAA19) (Arabidopsis thaliana (Mouse-ear cress)).